We begin with the raw amino-acid sequence, 217 residues long: Uracil-DNA glycosylase (217 aa).

Aspartate 62 (proton acceptor) is an active-site residue.

The protein belongs to the uracil-DNA glycosylase (UDG) superfamily. UNG family.

The protein resides in the cytoplasm. The enzyme catalyses Hydrolyzes single-stranded DNA or mismatched double-stranded DNA and polynucleotides, releasing free uracil.. Its function is as follows. Excises uracil residues from the DNA which can arise as a result of misincorporation of dUMP residues by DNA polymerase or due to deamination of cytosine. This chain is Uracil-DNA glycosylase, found in Streptococcus pneumoniae (strain JJA).